The chain runs to 1079 residues: MTNTKYYPEVSSNADFAAIEREILKLWQDNNIFQKSIDNRIKDAEFIFYDGPPFANGLPHYGHLLTGFIKDVYARYQTIKGKKVERRFGWDCHGLPAEMQSEQELGISGRLAITNFSIEKFNSHCRASVMKYTGEWEQYVTRQARWVDFKNSYKTMDTHFMESVLWAFKELYNKGLLYESMRVMPYSWACETPLSHFETRLDNSYRERADKAVTVSFMLRDKLPHSEYKEYRIFAWTTTPWTLPANLALAVGSDIDYALVPKNDICYIIAAASVSKYAKELELKGDEQFTIIKGSELEGLRYKPLFNYFENHPNSFKIFACDFVVEGDGTGVVHMAPGFGEDDQILCESKGIELVCPVDNSGKFTKEIPDLEGLQVFDANDKIIIKLKEQGNWLKTEQYIHNYPHCWRTDTPLIYKAVPSWYVKVTNFKDRIVELNQQINWIPSHVKDNVFGKWLENARDWSISRNRFWGTPLPVWKSDDPKYPRIDVYGSIEELEKDFGVKVTDLHRPFIDELTRANPDDPTGKSTMRRIEDVFDCWFESGSMPYSQAHYPFENKKWFEDHFPADFIVEYVAQTRGWFYTLMVLSTALFDRPPFLNCICHGVILDTTGQKLSKRLNNYADPLELFDKYGSDALRITMLSSNVVKGQELLIDKDGKMVFDTLRLFIKPIWNAYHFFTMYANADSLKGKSDFASENVLDIYILSKLKIAVQKIEKSLDNFDTQAAYHQVSEFFEVLNNWYIRRSRARFWKSEKDADKQNAYNTLYSCLETMAIAMSALVPMISEAIYLGLHNTVIPQLDYGISGDKPGAQDPIIKSQDGIRGCRNDNLSVHLCNYPKLSNFEVNHELVATMDTVLDICSNSLFIRSNENVRVRQPLASITIISKHNDKLKDFEDLIKDEINVKAIIYRDDLENYATTKLSLNFPMLGKRLPYKMKEIIAASKKGEWEATASALAICGETLKSEEYKLVLEPYSHIKGAASFADNSSLLILDLELTPELIKEGIARDIVRFIQQARKDADCSITDRILIEIISESDLSKIINIYGDYIKEQTLSEFAKDFTPDYVNEIELENHKIQLKIKR.

The 'HIGH' region signature appears at 53 to 63 (PFANGLPHYGH). The 'KMSKS' region motif lies at 611 to 615 (KLSKR). Residue Lys614 participates in ATP binding.

It belongs to the class-I aminoacyl-tRNA synthetase family. IleS type 2 subfamily. As to quaternary structure, monomer. Zn(2+) serves as cofactor.

The protein resides in the cytoplasm. It carries out the reaction tRNA(Ile) + L-isoleucine + ATP = L-isoleucyl-tRNA(Ile) + AMP + diphosphate. Its function is as follows. Catalyzes the attachment of isoleucine to tRNA(Ile). As IleRS can inadvertently accommodate and process structurally similar amino acids such as valine, to avoid such errors it has two additional distinct tRNA(Ile)-dependent editing activities. One activity is designated as 'pretransfer' editing and involves the hydrolysis of activated Val-AMP. The other activity is designated 'posttransfer' editing and involves deacylation of mischarged Val-tRNA(Ile). In Rickettsia canadensis (strain McKiel), this protein is Isoleucine--tRNA ligase.